The chain runs to 36 residues: Photosystem I reaction center subunit VIII (36 aa).

A helical membrane pass occupies residues 8 to 28 (SIFVPLVGLVFPAIAMASLFL).

This sequence belongs to the PsaI family.

It is found in the plastid. The protein localises to the chloroplast thylakoid membrane. Its function is as follows. May help in the organization of the PsaL subunit. This is Photosystem I reaction center subunit VIII from Solanum bulbocastanum (Wild potato).